Here is a 376-residue protein sequence, read N- to C-terminus: Phosphoserine aminotransferase (376 aa).

An L-glutamate-binding site is contributed by arginine 42. Residues tryptophan 104, threonine 163, aspartate 188, and glutamine 211 each coordinate pyridoxal 5'-phosphate. Lysine 212 is modified (N6-(pyridoxal phosphate)lysine). Residue 253 to 254 (NT) coordinates pyridoxal 5'-phosphate.

The protein belongs to the class-V pyridoxal-phosphate-dependent aminotransferase family. SerC subfamily. As to quaternary structure, homodimer. Requires pyridoxal 5'-phosphate as cofactor.

It localises to the cytoplasm. It carries out the reaction O-phospho-L-serine + 2-oxoglutarate = 3-phosphooxypyruvate + L-glutamate. It catalyses the reaction 4-(phosphooxy)-L-threonine + 2-oxoglutarate = (R)-3-hydroxy-2-oxo-4-phosphooxybutanoate + L-glutamate. It functions in the pathway amino-acid biosynthesis; L-serine biosynthesis; L-serine from 3-phospho-D-glycerate: step 2/3. Its pathway is cofactor biosynthesis; pyridoxine 5'-phosphate biosynthesis; pyridoxine 5'-phosphate from D-erythrose 4-phosphate: step 3/5. Its function is as follows. Catalyzes the reversible conversion of 3-phosphohydroxypyruvate to phosphoserine and of 3-hydroxy-2-oxo-4-phosphonooxybutanoate to phosphohydroxythreonine. In Bordetella avium (strain 197N), this protein is Phosphoserine aminotransferase.